A 54-amino-acid chain; its full sequence is Protein YojO (54 aa).

This sequence belongs to the YojO family.

This is Protein YojO (yojO) from Escherichia coli (strain K12).